The primary structure comprises 312 residues: Olfactory receptor 6C70 (312 aa).

At 1-22 (MKNHTRQIEFILLGLTDNSQLQ) the chain is on the extracellular side. Asn-3 carries N-linked (GlcNAc...) asparagine glycosylation. A helical membrane pass occupies residues 23–43 (IVIFLFLLLNCVLSMIGNFTI). The Cytoplasmic segment spans residues 44–63 (IALILLDSQLKTPMYFFLRN). A helical membrane pass occupies residues 64–84 (FSFLEISFTTACIPRFLITIV). At 85-95 (TREKTISCNGC) the chain is on the extracellular side. Cysteines 95 and 177 form a disulfide. The helical transmembrane segment at 96–116 (ISQLFFYIFLGVTEFFLLAAL) threads the bilayer. Topologically, residues 117–141 (SYDRYVAICKPLRYMSIMSNKVCYQ) are cytoplasmic. Residues 142-162 (LVFSSWVTGFLIIFTPLILGL) form a helical membrane-spanning segment. Residues 163–194 (NLDFCASNIIDHFICDISLILQLSCSDTHLLE) are Extracellular-facing. A helical membrane pass occupies residues 195 to 215 (LIAFLLAVMTLIVTLFLVILS). The Cytoplasmic portion of the chain corresponds to 216 to 237 (YSYIIKTILKFPSAQQKKKAFS). The chain crosses the membrane as a helical span at residues 238-258 (TCSSHMIVVSITYGSCMFIYI). The Extracellular segment spans residues 259–272 (KPSANERVALSKGV). The helical transmembrane segment at 273–290 (TVLNTSVAPLLNPFIYTL) threads the bilayer. Residues 291 to 312 (RNQQVKQAFKAVFRKIFSASDK) are Cytoplasmic-facing.

It belongs to the G-protein coupled receptor 1 family.

The protein resides in the cell membrane. In terms of biological role, odorant receptor. In Homo sapiens (Human), this protein is Olfactory receptor 6C70 (OR6C70).